The chain runs to 212 residues: Calaxin (212 aa).

EF-hand domains are found at residues T65 to G100, T101 to K136, and G146 to L181. Ca(2+)-binding residues include D78, D80, D82, C84, E89, D114, N116, D118, E125, D159, D161, D163, K165, and D170.

Component of the outer dynein arm-docking complex along with ODAD1, ODAD2, ODAD3 and ODAD4. In terms of tissue distribution, expressed in trachea multiciliated cells.

The protein resides in the cytoplasm. It is found in the cytoskeleton. It localises to the cilium axoneme. Its subcellular location is the cell projection. The protein localises to the cilium. The protein resides in the flagellum. Its function is as follows. Component of the outer dynein arm-docking complex (ODA-DC) that mediates outer dynein arms (ODA) binding onto the doublet microtubule. Seems to regulate the assembly of both ODAs and their axonemal docking complex onto ciliary microtubules. Regulates ciliary and flagellar motility and is required for cilia-driven determination of body laterality. This Bos taurus (Bovine) protein is Calaxin (CLXN).